Consider the following 280-residue polypeptide: Dermonecrotic toxin LgSicTox-alphaIA1 (280 aa).

His12 is a catalytic residue. Glu32 and Asp34 together coordinate Mg(2+). His48 acts as the Nucleophile in catalysis. An intrachain disulfide couples Cys52 to Cys58. Asp92 serves as a coordination point for Mg(2+).

Belongs to the arthropod phospholipase D family. Class I subfamily. It depends on Mg(2+) as a cofactor. In terms of tissue distribution, expressed by the venom gland.

The protein localises to the secreted. It carries out the reaction an N-(acyl)-sphingosylphosphocholine = an N-(acyl)-sphingosyl-1,3-cyclic phosphate + choline. It catalyses the reaction an N-(acyl)-sphingosylphosphoethanolamine = an N-(acyl)-sphingosyl-1,3-cyclic phosphate + ethanolamine. The catalysed reaction is a 1-acyl-sn-glycero-3-phosphocholine = a 1-acyl-sn-glycero-2,3-cyclic phosphate + choline. The enzyme catalyses a 1-acyl-sn-glycero-3-phosphoethanolamine = a 1-acyl-sn-glycero-2,3-cyclic phosphate + ethanolamine. Dermonecrotic toxins cleave the phosphodiester linkage between the phosphate and headgroup of certain phospholipids (sphingolipid and lysolipid substrates), forming an alcohol (often choline) and a cyclic phosphate. This toxin acts on sphingomyelin (SM). It may also act on ceramide phosphoethanolamine (CPE), lysophosphatidylcholine (LPC) and lysophosphatidylethanolamine (LPE), but not on lysophosphatidylserine (LPS), and lysophosphatidylglycerol (LPG). It acts by transphosphatidylation, releasing exclusively cyclic phosphate products as second products. Induces dermonecrosis, hemolysis, increased vascular permeability, edema, inflammatory response, and platelet aggregation. This is Dermonecrotic toxin LgSicTox-alphaIA1 from Loxosceles gaucho (Spider).